The sequence spans 244 residues: Putative nucleosome assembly protein C36B7.08c (244 aa).

The interval 199 to 244 (EAMTEEASDEDESVDLEEDEEEEDEEDEEGDEEKQEPPSKKSKKSN) is disordered. Acidic residues predominate over residues 201–232 (MTEEASDEDESVDLEEDEEEEDEEDEEGDEEK). Residue serine 211 is modified to Phosphoserine.

Belongs to the nucleosome assembly protein (NAP) family.

Its subcellular location is the nucleus. The protein is Putative nucleosome assembly protein C36B7.08c of Schizosaccharomyces pombe (strain 972 / ATCC 24843) (Fission yeast).